The chain runs to 230 residues: Enolase-phosphatase E1 (230 aa).

This sequence belongs to the HAD-like hydrolase superfamily. MasA/MtnC family. In terms of assembly, monomer. It depends on Mg(2+) as a cofactor.

It carries out the reaction 5-methylsulfanyl-2,3-dioxopentyl phosphate + H2O = 1,2-dihydroxy-5-(methylsulfanyl)pent-1-en-3-one + phosphate. It participates in amino-acid biosynthesis; L-methionine biosynthesis via salvage pathway; L-methionine from S-methyl-5-thio-alpha-D-ribose 1-phosphate: step 3/6. The protein operates within amino-acid biosynthesis; L-methionine biosynthesis via salvage pathway; L-methionine from S-methyl-5-thio-alpha-D-ribose 1-phosphate: step 4/6. Functionally, bifunctional enzyme that catalyzes the enolization of 2,3-diketo-5-methylthiopentyl-1-phosphate (DK-MTP-1-P) into the intermediate 2-hydroxy-3-keto-5-methylthiopentenyl-1-phosphate (HK-MTPenyl-1-P), which is then dephosphorylated to form the acireductone 1,2-dihydroxy-3-keto-5-methylthiopentene (DHK-MTPene). The protein is Enolase-phosphatase E1 of Bradyrhizobium sp. (strain BTAi1 / ATCC BAA-1182).